The following is a 601-amino-acid chain: Mitochondrial tRNA methylthiotransferase CDK5RAP1 (601 aa).

Residues 1–33 constitute a mitochondrion transit peptide; the sequence is MHPLQCVLQVQRSLGWGPLASVSWLSLRMCRAH. The 121-residue stretch at 100-220 folds into the MTTase N-terminal domain; that stretch reads RKVYLETYGC…LPRLLAVAES (121 aa). 6 residues coordinate [4Fe-4S] cluster: C109, C145, C183, C258, C262, and C265. The region spanning 244–512 is the Radical SAM core domain; it reads SASATSAFVS…ITIFREEATK (269 aa). The TRAM domain maps to 515 to 590; sequence QTSVGCTQLV…SQTLRGHVLC (76 aa).

Belongs to the methylthiotransferase family. MiaB subfamily. Interacts with CDK5R1 (p35 form). CDK5RAP1, CDK5RAP2 and CDK5RAP3 show competitive binding to CDK5R1. Forms a complex with CDK5R1 and CDK5. The cofactor is [4Fe-4S] cluster. As to expression, expressed in heart, brain, placenta, lung, liver, skeletal muscle, kidney and pancreas. Expressed in neurons of central nervous tissue. In terms of tissue distribution, mainly expressed in brain, placenta and testis. High expression in placenta and lung.

Its subcellular location is the mitochondrion. It catalyses the reaction N(6)-dimethylallyladenosine(37) in tRNA + (sulfur carrier)-SH + AH2 + 2 S-adenosyl-L-methionine = 2-methylsulfanyl-N(6)-dimethylallyladenosine(37) in tRNA + (sulfur carrier)-H + 5'-deoxyadenosine + L-methionine + A + S-adenosyl-L-homocysteine + 2 H(+). In terms of biological role, methylthiotransferase that catalyzes the conversion of N6-(dimethylallyl)adenosine (i(6)A) to 2-methylthio-N6-(dimethylallyl)adenosine (ms(2)i(6)A) at position 37 (adjacent to the 3'-end of the anticodon) of four mitochondrial DNA-encoded tRNAs (Ser(UCN), Phe, Tyr and Trp). Essential for efficient and highly accurate protein translation by the ribosome. Specifically inhibits CDK5 activation by CDK5R1. Essential for efficient mitochondrial protein synthesis and respiratory chain; shows pathological consequences in mitochondrial disease. The polypeptide is Mitochondrial tRNA methylthiotransferase CDK5RAP1 (Homo sapiens (Human)).